The following is a 3305-amino-acid chain: Apolipophorins (3305 aa).

Residues 1 to 23 (MGKSNRLLSVLFVISVLWKAAYG) form the signal peptide. The Vitellogenin domain maps to 39-640 (FAAGQKYNYG…SQTSFLPRSV (602 aa)). 2 N-linked (GlcNAc...) asparagine glycosylation sites follow: asparagine 643 and asparagine 2769. The 167-residue stretch at 2733-2899 (LRAVVVNGQH…NSYRLSRSCP (167 aa)) folds into the VWFD domain. Cysteine 2757 and cysteine 2898 are joined by a disulfide.

In terms of processing, cleaved into 2 chains by furin protease. However, prevention of cleavage does not impair its function. Post-translationally, N-glycosylated.

It localises to the secreted. In terms of biological role, constitutes the major component of lipophorin, which mediates transport for various types of lipids in hemolymph. Acts by forming lipoprotein particles that bind lipoproteins and lipids. May be required for morphogens wingless (wg) and hedgehog (hh) function, possibly by acting as vehicles for the movement of wg and hh. This chain is Apolipophorins, found in Manduca sexta (Tobacco hawkmoth).